A 286-amino-acid polypeptide reads, in one-letter code: ATP synthase gamma chain (286 aa).

It belongs to the ATPase gamma chain family. F-type ATPases have 2 components, CF(1) - the catalytic core - and CF(0) - the membrane proton channel. CF(1) has five subunits: alpha(3), beta(3), gamma(1), delta(1), epsilon(1). CF(0) has three main subunits: a, b and c.

The protein localises to the cell inner membrane. Produces ATP from ADP in the presence of a proton gradient across the membrane. The gamma chain is believed to be important in regulating ATPase activity and the flow of protons through the CF(0) complex. The chain is ATP synthase gamma chain from Pseudomonas fluorescens (strain ATCC BAA-477 / NRRL B-23932 / Pf-5).